Reading from the N-terminus, the 223-residue chain is uncharacterized protein (223 aa).

This is an uncharacterized protein from Acanthamoeba polyphaga (Amoeba).